The primary structure comprises 69 residues: uncharacterized protein (69 aa).

It localises to the mitochondrion. This is an uncharacterized protein from Marchantia polymorpha (Common liverwort).